Consider the following 730-residue polypeptide: Regulatory factor X 4 (730 aa).

Over residues 30–41 the composition is skewed to polar residues; that stretch reads YSSHTSLGNISN. The disordered stretch occupies residues 30 to 59; it reads YSSHTSLGNISNDETDEEKENRASKPHSTP. A DNA-binding region (RFX-type winged-helix) is located at residues 61 to 136; that stretch reads TLQWLGENYE…YHYYGIAVKE (76 aa). Residues 500 to 532 form a disordered region; the sequence is EPAISTPSPVPFSPAASSSSVEIPSATSPVSNQ. Positions 512-528 are enriched in low complexity; sequence SPAASSSSVEIPSATSP.

The protein belongs to the RFX family.

The protein localises to the nucleus. Its function is as follows. Required for neural tube ciliogenesis during embryogenesis. The protein is Regulatory factor X 4 of Xenopus laevis (African clawed frog).